The following is a 462-amino-acid chain: Exodeoxyribonuclease 7 large subunit (462 aa).

The protein belongs to the XseA family. As to quaternary structure, heterooligomer composed of large and small subunits.

It is found in the cytoplasm. It catalyses the reaction Exonucleolytic cleavage in either 5'- to 3'- or 3'- to 5'-direction to yield nucleoside 5'-phosphates.. In terms of biological role, bidirectionally degrades single-stranded DNA into large acid-insoluble oligonucleotides, which are then degraded further into small acid-soluble oligonucleotides. The polypeptide is Exodeoxyribonuclease 7 large subunit (Pectobacterium carotovorum subsp. carotovorum (strain PC1)).